A 94-amino-acid polypeptide reads, in one-letter code: Putative RNA-binding protein RbpD (94 aa).

The RRM domain occupies 2–79; it reads TIYVGNLSYR…RQLRVNKAKP (78 aa). The tract at residues 73–94 is disordered; the sequence is RVNKAKPREDDRRGSWGKKQDY. The segment covering 78–94 has biased composition (basic and acidic residues); it reads KPREDDRRGSWGKKQDY.

This Nostoc sp. (strain PCC 7120 / SAG 25.82 / UTEX 2576) protein is Putative RNA-binding protein RbpD (rbpD).